Reading from the N-terminus, the 287-residue chain is 3-alpha-hydroxysteroid sulfotransferase (287 aa).

Lys-44 to Trp-49 is a 3'-phosphoadenylyl sulfate binding site. Residues Trp-72 and Trp-77 each coordinate substrate. His-99 acts as the Proton acceptor in catalysis. 3'-phosphoadenylyl sulfate-binding positions include Arg-121, Ser-129, Tyr-184, Ser-218–Met-223, and Arg-247–Gly-249.

This sequence belongs to the sulfotransferase 1 family. Homodimer. As to expression, adrenal gland and liver.

It localises to the cytoplasm. It catalyses the reaction an alcohol + 3'-phosphoadenylyl sulfate = an alkyl sulfate + adenosine 3',5'-bisphosphate + H(+). Sulfotransferase that utilizes 3'-phospho-5'-adenylyl sulfate (PAPS) as sulfonate donor to catalyze the sulfonation of 3-alpha-hydroxyl groups of neutral steroids. This chain is 3-alpha-hydroxysteroid sulfotransferase (STD1), found in Cavia porcellus (Guinea pig).